The chain runs to 225 residues: Tryptophan synthase beta chain (225 aa).

Belongs to the TrpB family. As to quaternary structure, tetramer of two alpha and two beta chains. Pyridoxal 5'-phosphate is required as a cofactor.

It catalyses the reaction (1S,2R)-1-C-(indol-3-yl)glycerol 3-phosphate + L-serine = D-glyceraldehyde 3-phosphate + L-tryptophan + H2O. It functions in the pathway amino-acid biosynthesis; L-tryptophan biosynthesis; L-tryptophan from chorismate: step 5/5. Its function is as follows. The beta subunit is responsible for the synthesis of L-tryptophan from indole and L-serine. The polypeptide is Tryptophan synthase beta chain (trpB) (Buchnera aphidicola subsp. Rhopalosiphum maidis).